The sequence spans 151 residues: Deoxyuridine 5'-triphosphate nucleotidohydrolase (151 aa).

Substrate contacts are provided by residues 70–72 (RSG), Asn-83, 87–89 (LID), and Met-97.

Belongs to the dUTPase family. The cofactor is Mg(2+).

It catalyses the reaction dUTP + H2O = dUMP + diphosphate + H(+). It functions in the pathway pyrimidine metabolism; dUMP biosynthesis; dUMP from dCTP (dUTP route): step 2/2. In terms of biological role, this enzyme is involved in nucleotide metabolism: it produces dUMP, the immediate precursor of thymidine nucleotides and it decreases the intracellular concentration of dUTP so that uracil cannot be incorporated into DNA. This is Deoxyuridine 5'-triphosphate nucleotidohydrolase from Yersinia pseudotuberculosis serotype O:1b (strain IP 31758).